Reading from the N-terminus, the 1623-residue chain is ABC transporter C family member 2 (1623 aa).

9 helical membrane-spanning segments follow: residues 37 to 57 (FVLG…IWLA), 76 to 96 (FLAL…IMGI), 109 to 129 (FEAF…VMIL), 145 to 165 (FAVI…LSVK), 172 to 192 (VLYL…LLFM), 336 to 356 (AWMG…GVLC), 440 to 460 (VASL…TVII), 527 to 547 (FILN…FTLL), and 557 to 577 (FTSL…PNII). One can recognise an ABC transmembrane type-1 1 domain in the interval 302–582 (FWWGGFWKIG…LPNIITQVVN (281 aa)). Positions 614 to 838 (ISIRNGYFSW…GPLFQRLMEN (225 aa)) constitute an ABC transporter 1 domain. 649–656 (GSTGEGKT) serves as a coordination point for ATP. Positions 842-890 (VEEYSEENGEAEADQTAEQPVANGNTNGLQMDGSDDKKSKEGNKKGGKS) are disordered. A compositionally biased stretch (acidic residues) spans 845-856 (YSEENGEAEADQ). Residues 857–870 (TAEQPVANGNTNGL) show a composition bias toward polar residues. A compositionally biased stretch (basic and acidic residues) spans 875-885 (SDDKKSKEGNK). Helical transmembrane passes span 914–934 (ALGG…TEVF), 955–975 (GPLF…LVTL), 1032–1054 (AVFV…LIGI), 1058–1077 (LSLW…YLYY), 1143–1163 (LGIR…SFAV), and 1177–1197 (STMG…TGVL). The region spanning 921 to 1205 (VMMLLLCYVL…VLRLASLAEN (285 aa)) is the ABC transmembrane type-1 2 domain. The interval 1236-1251 (WPSSGSIKFEDVVLRY) is interaction with calmodulin and FKP42/TWD1. In terms of domain architecture, ABC transporter 2 spans 1242–1476 (IKFEDVVLRY…EGSSFSKMVQ (235 aa)). 1276–1283 (GRTGAGKS) contacts ATP.

The protein belongs to the ABC transporter superfamily. ABCC family. Conjugate transporter (TC 3.A.1.208) subfamily. As to quaternary structure, interacts with FKBP42/TWD1 and probably with calmodulin (CaM). In terms of tissue distribution, ubiquitous, at low levels.

The protein resides in the vacuole membrane. The enzyme catalyses ATP + H2O + xenobioticSide 1 = ADP + phosphate + xenobioticSide 2.. With respect to regulation, reciprocal promotion of DNP-GS and E(2)17betaG uptake. E(2)17betaG uptake is also stimulated by GSH and S-methyl-glutathione (S-methyl-GS), and, to a lower extent, by GSSG and C3G-GS. Metolachlor-GS and decyl-GS slightly inhibit E(2)17betaG uptake. Functionally, pump for glutathione S-conjugates. Mediates the transport of S-conjugates such as GSH, S-(2,4-dinitrophenyl)-glutathione (DNP-GS), GSSG, cyanidin 3-glucoside-GS (C3G-GS) and metolachlor-GS (MOC-GS), glucuronides such as 17-beta-estradiol 17-(beta-D-glucuronide) (E(2)17betaG), and of the chlorophyll catabolite such as B.napus nonfluorescent chlorophyll catabolite (Bn-NCC-1). The protein is ABC transporter C family member 2 (ABCC2) of Arabidopsis thaliana (Mouse-ear cress).